Here is a 247-residue protein sequence, read N- to C-terminus: Probable transcriptional regulatory protein Syncc9605_2132 (247 aa).

Belongs to the TACO1 family.

The protein localises to the cytoplasm. This Synechococcus sp. (strain CC9605) protein is Probable transcriptional regulatory protein Syncc9605_2132.